Here is a 431-residue protein sequence, read N- to C-terminus: Evolutionarily conserved signaling intermediate in Toll pathway, mitochondrial (431 aa).

Residues Met1–His48 constitute a mitochondrion transit peptide. Residue Lys372 forms a Glycyl lysine isopeptide (Lys-Gly) (interchain with G-Cter in ubiquitin) linkage. Residues Leu400–Ser431 are disordered.

The protein belongs to the ECSIT family. As to quaternary structure, interacts with MAP3K1, SMAD4 and TRAF6. Interacts with SMAD1 only after BMP4-treatment. Part of the mitochondrial complex I assembly/MCIA complex that comprises at least the core subunits TMEM126B, NDUFAF1, ECSIT and ACAD9 and complement subunits such as COA1 and TMEM186. Interacts with NDUFAF1. Interacts with ACAD9. Interacts with TRIM59. Interacts with TMEM70 and TMEM242. Interacts (when ubiquitinated) with NF-kappa-B subunits RELA and NFKB1. Interacts with RIGI, IFIT1 and MAVS; these interactions promote RLR-mediated type I IFN induction. Interacts with SQSTM1; this interaction inhibits TLR4 signaling via functional regulation of the TRAF6-ECSIT complex. Interacts with cereblon/CRBN; this interaction inhibits the ubiquitination of ECSIT. Post-translationally, ubiquitinated on Lys-372; leading to translocation in the nucleus together with RELA and NFKB1 and expression of NF-kappa-B-dependent genes.

It localises to the cytoplasm. The protein localises to the nucleus. Its subcellular location is the mitochondrion. Its function is as follows. Adapter protein that plays a role in different signaling pathways including TLRs and IL-1 pathways or innate antiviral induction signaling. Plays a role in the activation of NF-kappa-B by forming a signal complex with TRAF6 and TAK1/MAP3K7 to activate TAK1/MAP3K7 leading to activation of IKKs. Once ubiquitinated, interacts with the dissociated RELA and NFKB1 proteins and translocates to the nucleus where it induces NF-kappa-B-dependent gene expression. Plays a role in innate antiviral immune response by bridging the pattern recognition receptors RIGI and MDA5/IFIT1 to the MAVS complex at the mitochondrion. Promotes proteolytic activation of MAP3K1. Involved in the BMP signaling pathway. Required for normal embryonic development. Functionally, as part of the MCIA complex, involved in the assembly of the mitochondrial complex I. The chain is Evolutionarily conserved signaling intermediate in Toll pathway, mitochondrial from Homo sapiens (Human).